The following is a 292-amino-acid chain: Glycine--tRNA ligase alpha subunit (292 aa).

Belongs to the class-II aminoacyl-tRNA synthetase family. Tetramer of two alpha and two beta subunits.

The protein localises to the cytoplasm. The enzyme catalyses tRNA(Gly) + glycine + ATP = glycyl-tRNA(Gly) + AMP + diphosphate. The sequence is that of Glycine--tRNA ligase alpha subunit from Pelotomaculum thermopropionicum (strain DSM 13744 / JCM 10971 / SI).